The following is a 348-amino-acid chain: N-(sulfonatooxy)prop-2-enimidothioate sulfolyase (348 aa).

Kelch repeat units lie at residues 1–33 (MARTLQGEWMKVEQKGGQVPAPRSSHGIAVIGD), 34–85 (KLYC…VAVG), 87–133 (KLYV…FHSM), 139–194 (HVYV…VVQG), 209–254 (KIPT…FAHA), 259–314 (YIII…ASTT), and 322–348 (GLLVHGGKLMTNERTDEMYFFAVNSST). A (Z)-N-(sulfonatooxy)alkanimidothioate contacts are provided by Glu-46, Arg-94, Thr-129, Phe-130, and Arg-157. The active-site Proton donor is Arg-94. Arg-157 (proton donor) is an active-site residue. Catalysis depends on Glu-220, which acts as the Proton acceptor. Glu-266 is a Fe(2+) binding site. Arg-269 is an a (Z)-N-(sulfonatooxy)alkanimidothioate binding site. Residues Asp-270 and His-274 each coordinate Fe(2+). Residues Trp-309 and Val-310 each coordinate a (Z)-N-(sulfonatooxy)alkanimidothioate.

In terms of assembly, homodimer. It depends on Fe(2+) as a cofactor. Expressed constitutively in roots, stems, leaves, flowers, siliques and seedlings.

It catalyses the reaction (Z)-N-(sulfonatooxy)prop-2-enimidothioate = allyl thiocyanate + sulfate. The catalysed reaction is (Z)-N-(sulfonatooxy)prop-2-enimidothioate = 2-(thiiran-2-yl)acetonitrile + sulfate. It carries out the reaction (Z)-N-(sulfonatooxy)prop-2-enimidothioate = allyl isothiocyanate + sulfate. The enzyme catalyses (Z)-phenyl-N-(sulfonatooxy)methanimidothioate = phenylacetonitrile + sulfur + sulfate. It catalyses the reaction glucoerucin + H2O = (Z)-4-methylsulfanylbutyl-N-(sulfonatooxy)methanimidothioate + D-glucose. The catalysed reaction is (Z)-4-methylsulfanylbutyl-N-(sulfonatooxy)methanimidothioate = 5-(methylsulfanyl)pentanenitrile + sulfur + sulfate + H(+). Its activity is regulated as follows. Stimulated by the presence of Fe(2+) leading to an increase formation of both thiocyanate and epithionitrile with allylglucosinolate as substrate in the presence of myrosinase. Repressed by EDTA. Specifier protein that contributes to constitutive and herbivore-induced simple nitrile formation. Catalyzes allylthiocyanate and corresponding epithionitrile formation from allylglucosinolate in the presence of myrosinase. Also converts aliphatic glucosinolates, such as indol-3-ylmethylglucosinolate, 4-methylsulfinylbutylglucosinolate, 4-methylthiobutyl- and benzylisothiocyanate, to simple nitriles. The sequence is that of N-(sulfonatooxy)prop-2-enimidothioate sulfolyase from Thlaspi arvense (Field penny-cress).